We begin with the raw amino-acid sequence, 1183 residues long: Chromosome partition protein Smc (1183 aa).

Pro-32–Asn-39 serves as a coordination point for ATP. Residues Glu-162–Glu-483 adopt a coiled-coil conformation. One can recognise an SMC hinge domain in the interval Ser-519–Ile-632. Positions Ile-666–Glu-1019 form a coiled coil.

Belongs to the SMC family. Homodimer.

The protein localises to the cytoplasm. Its function is as follows. Required for chromosome condensation and partitioning. The chain is Chromosome partition protein Smc from Fusobacterium nucleatum subsp. nucleatum (strain ATCC 25586 / DSM 15643 / BCRC 10681 / CIP 101130 / JCM 8532 / KCTC 2640 / LMG 13131 / VPI 4355).